The following is a 116-amino-acid chain: Orphan antitoxin YagB (116 aa).

Belongs to the CbeA/YafW/YfjZ antitoxin family.

Its function is as follows. Putative antitoxin component of a type IV toxin-antitoxin (TA) system; its cognate toxin is unknown. The polypeptide is Orphan antitoxin YagB (yagB) (Escherichia coli (strain K12)).